The sequence spans 448 residues: Glutamate--tRNA ligase (448 aa).

Residues Pro-10–Asn-20 carry the 'HIGH' region motif. The 'KMSKS' region signature appears at Lys-214 to Arg-218. Lys-217 contacts ATP.

The protein belongs to the class-I aminoacyl-tRNA synthetase family. Glutamate--tRNA ligase type 1 subfamily. As to quaternary structure, monomer.

The protein localises to the cytoplasm. The enzyme catalyses tRNA(Glu) + L-glutamate + ATP = L-glutamyl-tRNA(Glu) + AMP + diphosphate. Functionally, catalyzes the attachment of glutamate to tRNA(Glu) in a two-step reaction: glutamate is first activated by ATP to form Glu-AMP and then transferred to the acceptor end of tRNA(Glu). The polypeptide is Glutamate--tRNA ligase (Phytoplasma australiense).